The primary structure comprises 283 residues: Polyamine aminopropyltransferase (283 aa).

Positions 2–237 constitute a PABS domain; sequence ELWYTEEHTD…GHWLFGFASK (236 aa). Gln31 serves as a coordination point for S-methyl-5'-thioadenosine. Residues His62 and Asp86 each coordinate spermidine. Residues Glu106 and 137–138 each bind S-methyl-5'-thioadenosine; that span reads DG. Asp155 serves as the catalytic Proton acceptor. 155 to 158 contributes to the spermidine binding site; sequence DSTD. Residue Pro162 coordinates S-methyl-5'-thioadenosine.

This sequence belongs to the spermidine/spermine synthase family. In terms of assembly, homodimer or homotetramer.

It is found in the cytoplasm. It carries out the reaction S-adenosyl 3-(methylsulfanyl)propylamine + putrescine = S-methyl-5'-thioadenosine + spermidine + H(+). It functions in the pathway amine and polyamine biosynthesis; spermidine biosynthesis; spermidine from putrescine: step 1/1. Catalyzes the irreversible transfer of a propylamine group from the amino donor S-adenosylmethioninamine (decarboxy-AdoMet) to putrescine (1,4-diaminobutane) to yield spermidine. The chain is Polyamine aminopropyltransferase from Clostridium perfringens (strain 13 / Type A).